We begin with the raw amino-acid sequence, 402 residues long: Protochlorophyllide reductase B, chloroplastic (402 aa).

It belongs to the short-chain dehydrogenases/reductases (SDR) family. POR subfamily.

The protein resides in the plastid. Its subcellular location is the chloroplast. It carries out the reaction chlorophyllide a + NADP(+) = protochlorophyllide a + NADPH + H(+). Its pathway is porphyrin-containing compound metabolism; chlorophyll biosynthesis. Phototransformation of protochlorophyllide (Pchlide) to chlorophyllide (Chlide). This Oryza sativa subsp. japonica (Rice) protein is Protochlorophyllide reductase B, chloroplastic (PORB).